Reading from the N-terminus, the 356-residue chain is UDP-N-acetylglucosamine--N-acetylmuramyl-(pentapeptide) pyrophosphoryl-undecaprenol N-acetylglucosamine transferase (356 aa).

UDP-N-acetyl-alpha-D-glucosamine-binding positions include 15–17, asparagine 127, arginine 163, serine 191, isoleucine 244, 263–268, and glutamine 288; these read TGG and ALTVSE.

Belongs to the glycosyltransferase 28 family. MurG subfamily.

The protein localises to the cell inner membrane. It carries out the reaction di-trans,octa-cis-undecaprenyl diphospho-N-acetyl-alpha-D-muramoyl-L-alanyl-D-glutamyl-meso-2,6-diaminopimeloyl-D-alanyl-D-alanine + UDP-N-acetyl-alpha-D-glucosamine = di-trans,octa-cis-undecaprenyl diphospho-[N-acetyl-alpha-D-glucosaminyl-(1-&gt;4)]-N-acetyl-alpha-D-muramoyl-L-alanyl-D-glutamyl-meso-2,6-diaminopimeloyl-D-alanyl-D-alanine + UDP + H(+). It functions in the pathway cell wall biogenesis; peptidoglycan biosynthesis. Its function is as follows. Cell wall formation. Catalyzes the transfer of a GlcNAc subunit on undecaprenyl-pyrophosphoryl-MurNAc-pentapeptide (lipid intermediate I) to form undecaprenyl-pyrophosphoryl-MurNAc-(pentapeptide)GlcNAc (lipid intermediate II). This chain is UDP-N-acetylglucosamine--N-acetylmuramyl-(pentapeptide) pyrophosphoryl-undecaprenol N-acetylglucosamine transferase, found in Yersinia pestis bv. Antiqua (strain Antiqua).